The chain runs to 244 residues: tRNA (guanine-N(1)-)-methyltransferase (244 aa).

S-adenosyl-L-methionine-binding positions include G123 and 143–148 (LGDFVM).

The protein belongs to the RNA methyltransferase TrmD family. As to quaternary structure, homodimer.

The protein resides in the cytoplasm. The catalysed reaction is guanosine(37) in tRNA + S-adenosyl-L-methionine = N(1)-methylguanosine(37) in tRNA + S-adenosyl-L-homocysteine + H(+). Functionally, specifically methylates guanosine-37 in various tRNAs. In Ruegeria sp. (strain TM1040) (Silicibacter sp.), this protein is tRNA (guanine-N(1)-)-methyltransferase.